Reading from the N-terminus, the 62-residue chain is Large ribosomal subunit protein uL29 (62 aa).

This sequence belongs to the universal ribosomal protein uL29 family.

The protein is Large ribosomal subunit protein uL29 of Laribacter hongkongensis (strain HLHK9).